The following is a 166-amino-acid chain: UPF0336 protein Mb0656 (166 aa).

This sequence belongs to the UPF0336 family.

This Mycobacterium bovis (strain ATCC BAA-935 / AF2122/97) protein is UPF0336 protein Mb0656.